The primary structure comprises 255 residues: Na(+)-translocating NADH-quinone reductase subunit C (255 aa).

The chain crosses the membrane as a helical span at residues 11 to 31 (LGVVVGLSLVCSIIVSTAAVG). Thr223 is modified (FMN phosphoryl threonine).

It belongs to the NqrC family. As to quaternary structure, composed of six subunits; NqrA, NqrB, NqrC, NqrD, NqrE and NqrF. It depends on FMN as a cofactor.

The protein resides in the cell inner membrane. It catalyses the reaction a ubiquinone + n Na(+)(in) + NADH + H(+) = a ubiquinol + n Na(+)(out) + NAD(+). Functionally, NQR complex catalyzes the reduction of ubiquinone-1 to ubiquinol by two successive reactions, coupled with the transport of Na(+) ions from the cytoplasm to the periplasm. NqrA to NqrE are probably involved in the second step, the conversion of ubisemiquinone to ubiquinol. The sequence is that of Na(+)-translocating NADH-quinone reductase subunit C from Vibrio vulnificus (strain CMCP6).